The sequence spans 453 residues: Phosphoglucosamine mutase (453 aa).

S108 serves as the catalytic Phosphoserine intermediate. Positions 108, 247, 249, and 251 each coordinate Mg(2+). Phosphoserine is present on S108.

This sequence belongs to the phosphohexose mutase family. Mg(2+) serves as cofactor. Activated by phosphorylation.

The catalysed reaction is alpha-D-glucosamine 1-phosphate = D-glucosamine 6-phosphate. Catalyzes the conversion of glucosamine-6-phosphate to glucosamine-1-phosphate. The chain is Phosphoglucosamine mutase from Methylobacillus flagellatus (strain ATCC 51484 / DSM 6875 / VKM B-1610 / KT).